Consider the following 161-residue polypeptide: uncharacterized protein (161 aa).

This sequence belongs to the sapovirus VP3 family.

This is an uncharacterized protein from Sapporo virus (isolate GI/Human/Germany/pJG-Sap01) (Hu/Dresden/pJG-Sap01/DE).